The chain runs to 511 residues: Pentatricopeptide repeat-containing protein At5g08510 (511 aa).

PPR repeat units follow at residues 46–80 (CTFL…GLRP), 81–115 (SHHT…GFES), 116–146 (DSFC…MSKR), 147–181 (DVPV…NVTS), 182–213 (WTTV…SVKP), 214–248 (NHIT…GFFD), 249–279 (NIYV…LGNQ), 281–315 (NLCS…GEKP), 316–346 (DAVT…MEEV), and 352–382 (KLEH…MPMK). The interval 387-462 (VWGTLLGACS…AAGYSYFVEV (76 aa)) is type E motif. The segment at 463-494 (GVDVHKFTVEDKSHPRSYEIYQVLEEIFRRMK) is type E(+) motif.

Belongs to the PPR family. PCMP-E subfamily.

The chain is Pentatricopeptide repeat-containing protein At5g08510 (PCMP-E20) from Arabidopsis thaliana (Mouse-ear cress).